The primary structure comprises 481 residues: RAC-beta serine/threonine-protein kinase (481 aa).

The residue at position 1 (Met-1) is an N-acetylmethionine. The region spanning 5-108 (SVIKEGWLHK…WMRAIQMVAN (104 aa)) is the PH domain. Ser-34 is subject to Phosphoserine. A disulfide bridge links Cys-60 with Cys-77. Position 126 is a phosphoserine (Ser-126). Ser-128 and Ser-131 each carry an O-linked (GlcNAc) serine glycan. Residues 152 to 409 (FDYLKLLGKG…AKEVMEHRFF (258 aa)) form the Protein kinase domain. ATP-binding positions include 158–166 (LGKGTFGKV) and Lys-181. Asp-275 acts as the Proton acceptor in catalysis. Residues Asn-280 and Asp-293 each coordinate Mn(2+). An intrachain disulfide couples Cys-297 to Cys-311. A glycan (O-linked (GlcNAc) threonine) is linked at Thr-306. Thr-309 is modified (phosphothreonine; by PDPK1). A glycan (O-linked (GlcNAc) threonine) is linked at Thr-313. The 72-residue stretch at 410-481 (LSINWQDVVQ…QFSYSASIRE (72 aa)) folds into the AGC-kinase C-terminal domain. The residue at position 447 (Ser-447) is a Phosphoserine. Thr-451 is modified (phosphothreonine). Ser-474 and Ser-478 each carry phosphoserine. O-linked (GlcNAc) serine; alternate glycosylation occurs at Ser-474.

Belongs to the protein kinase superfamily. AGC Ser/Thr protein kinase family. RAC subfamily. Interacts with BTBD10. Interacts with KCTD20. Interacts (via PH domain) with MTCP1, TCL1A and TCL1B; this interaction may facilitate AKT2 oligomerization and phosphorylation, hence increasing kinase activity. Interacts with PHB2; this interaction may be important for myogenic differentiation. Interacts (when phosphorylated) with CLIP3/ClipR-59; this interaction promotes AKT2 recruitment to the plasma membrane. Interacts with WDFY2/ProF (via WD repeats 1-3). Post-translationally, phosphorylation on Thr-309 and Ser-474 is required for full activity. Phosphorylation of the activation loop at Thr-309 by PDPK1/PDK1 is a prerequisite for full activation. Phosphorylated and activated by PDPK1/PDK1 in the presence of phosphatidylinositol 3,4,5-trisphosphate. Phosphorylation by mTORC2 in response to growth factors plays a key role in AKT1 activation: mTORC2 phosphorylates different sites depending on the context, such as Ser-474 or Ser-478, thereby facilitating subsequent phosphorylation of the activation loop by PDPK1/PDK1. Ubiquitinated; undergoes both 'Lys-48'- and 'Lys-63'-linked polyubiquitination. TRAF6 catalyzes 'Lys-63'-linked AKT2 ubiquitination; this modification may be important for AKT2 recruitment to the plasma membrane and for AKT2 activating phosphorylation. When phosphorylated, undergoes 'Lys-48'-polyubiquitination catalyzed by TTC3 in the nucleus, leading to its degradation by the proteasome. In terms of processing, O-GlcNAcylation at Thr-306 and Thr-313 inhibits activating phosphorylation at Thr-309 via the disruption of the interaction between AKT and PDPK1/PDK1. As to expression, widely expressed. Expressed in myoblasts.

It is found in the cytoplasm. The protein localises to the nucleus. It localises to the cell membrane. Its subcellular location is the early endosome. The catalysed reaction is L-seryl-[protein] + ATP = O-phospho-L-seryl-[protein] + ADP + H(+). It carries out the reaction L-threonyl-[protein] + ATP = O-phospho-L-threonyl-[protein] + ADP + H(+). With respect to regulation, phosphorylation at Thr-309 (in the kinase domain) and Ser-474 (in the C-terminal regulatory region) is required for full activation. In adipocytes and hepatocytes, the activation is induced by insulin. Aminofurazans, such as 4-[2-(4-amino-2,5-dihydro-1,2,5-oxadiazol-3-yl)-6-{[(1S)-3-amino-1-phenylpropyl]oxy}-1-ethyl-1H-imidazo[4,5-c]pyridin-4-yl]-2-methylbut-3-yn-2-ol (compound 32), are potent AKT2 inhibitors. AKT2 phosphorylation of PKP1 is induced by insulin. Functionally, serine/threonine kinase closely related to AKT1 and AKT3. All 3 enzymes, AKT1, AKT2 and AKT3, are collectively known as AKT kinase. AKT regulates many processes including metabolism, proliferation, cell survival, growth and angiogenesis, through the phosphorylation of a range of downstream substrates. Over 100 substrates have been reported so far, although for most of them, the precise AKT kinase catalyzing the reaction was not specified. AKT regulates glucose uptake by mediating insulin-induced translocation of the SLC2A4/GLUT4 glucose transporter to the cell surface. Phosphorylation of PTPN1 at 'Ser-50' negatively modulates its phosphatase activity preventing dephosphorylation of the insulin receptor and the attenuation of insulin signaling. Phosphorylation of TBC1D4 triggers the binding of this effector to inhibitory 14-3-3 proteins, which is required for insulin-stimulated glucose transport. AKT also regulates the storage of glucose in the form of glycogen by phosphorylating GSK3A at 'Ser-21' and GSK3B at 'Ser-9', resulting in inhibition of its kinase activity. Phosphorylation of GSK3 isoforms by AKT is also thought to be one mechanism by which cell proliferation is driven. AKT also regulates cell survival via the phosphorylation of MAP3K5 (apoptosis signal-related kinase). Phosphorylation of 'Ser-83' decreases MAP3K5 kinase activity stimulated by oxidative stress and thereby prevents apoptosis. AKT mediates insulin-stimulated protein synthesis by phosphorylating TSC2 at 'Ser-939' and 'Thr-1462', thereby activating mTORC1 signaling and leading to both phosphorylation of 4E-BP1 and in activation of RPS6KB1. AKT is involved in the phosphorylation of members of the FOXO factors (Forkhead family of transcription factors), leading to binding of 14-3-3 proteins and cytoplasmic localization. In particular, FOXO1 is phosphorylated at 'Thr-24', 'Ser-256' and 'Ser-319'. FOXO3 and FOXO4 are phosphorylated on equivalent sites. AKT has an important role in the regulation of NF-kappa-B-dependent gene transcription and positively regulates the activity of CREB1 (cyclic AMP (cAMP)-response element binding protein). The phosphorylation of CREB1 induces the binding of accessory proteins that are necessary for the transcription of pro-survival genes such as BCL2 and MCL1. AKT phosphorylates 'Ser-454' on ATP citrate lyase (ACLY), thereby potentially regulating ACLY activity and fatty acid synthesis. Activates the 3B isoform of cyclic nucleotide phosphodiesterase (PDE3B) via phosphorylation of 'Ser-273', resulting in reduced cyclic AMP levels and inhibition of lipolysis. Phosphorylates PIKFYVE on 'Ser-318', which results in increased PI(3)P-5 activity. The Rho GTPase-activating protein DLC1 is another substrate and its phosphorylation is implicated in the regulation cell proliferation and cell growth. AKT plays a role as key modulator of the AKT-mTOR signaling pathway controlling the tempo of the process of newborn neurons integration during adult neurogenesis, including correct neuron positioning, dendritic development and synapse formation. Signals downstream of phosphatidylinositol 3-kinase (PI(3)K) to mediate the effects of various growth factors such as platelet-derived growth factor (PDGF), epidermal growth factor (EGF), insulin and insulin-like growth factor 1 (IGF1). AKT mediates the antiapoptotic effects of IGF1. Essential for the SPATA13-mediated regulation of cell migration and adhesion assembly and disassembly. May be involved in the regulation of the placental development. In response to lysophosphatidic acid stimulation, inhibits the ciliogenesis cascade. In this context, phosphorylates WDR44, hence stabilizing its interaction with Rab11 and preventing the formation of the ciliogenic Rab11-FIP3-RAB3IP complex. Also phosphorylates RAB3IP/Rabin8, thus may affect RAB3IP guanine nucleotide exchange factor (GEF) activity toward Rab8, which is important for cilia growth. Phosphorylates PKP1, facilitating its interaction with YWHAG and translocation to the nucleus, ultimately resulting in a reduction in keratinocyte intercellular adhesion. Phosphorylation of PKP1 increases PKP1 protein stability, translocation to the cytoplasm away from desmosome plaques and PKP1-driven cap-dependent translation. Its function is as follows. Several AKT2-specific substrates have been identified, including ANKRD2, C2CD5, CLK2 and PITX2. May play a role in myoblast differentiation. In this context, may act through PITX2 phosphorylation. Unphosphorylated PITX2 associates with an ELAVL1/HuR-containing complex, which stabilizes CCND1 cyclin mRNA, ensuring cell proliferation. Phosphorylation by AKT2 impairs this association, leading to CCND1 mRNA destabilization and progression towards differentiation. Also involved in the negative regulation of myogenesis in response to stress conditions. In this context, acts by phosphorylating ANKRD2. May also be a key regulator of glucose uptake. Regulates insulin-stimulated glucose transport by the increase of glucose transporter GLUT4 translocation from intracellular stores to the plasma membrane. In this context, acts by phosphorylating C2CD5/CDP138 on 'Ser-197' in insulin-stimulated adipocytes. Through the phosphorylation of CLK2 on 'Thr-343', involved in insulin-regulated suppression of hepatic gluconeogenesis. This chain is RAC-beta serine/threonine-protein kinase, found in Homo sapiens (Human).